The sequence spans 128 residues: Large ribosomal subunit protein uL22 (128 aa).

Belongs to the universal ribosomal protein uL22 family. Part of the 50S ribosomal subunit.

In terms of biological role, this protein binds specifically to 23S rRNA; its binding is stimulated by other ribosomal proteins, e.g. L4, L17, and L20. It is important during the early stages of 50S assembly. It makes multiple contacts with different domains of the 23S rRNA in the assembled 50S subunit and ribosome. The globular domain of the protein is located near the polypeptide exit tunnel on the outside of the subunit, while an extended beta-hairpin is found that lines the wall of the exit tunnel in the center of the 70S ribosome. This is Large ribosomal subunit protein uL22 from Prochlorococcus marinus (strain MIT 9312).